We begin with the raw amino-acid sequence, 299 residues long: Anti-sigma-D factor RsdA (299 aa).

The helical transmembrane segment at 86 to 106 (LAAVGSVAAALLVLSGFGAVV) threads the bilayer. The interval 187–299 (NTKVETRDPN…APETPVSPTH (113 aa)) is disordered. Composition is skewed to low complexity over residues 201–212 (PGSPSNPAAPGS) and 250–271 (PNST…EPGS).

In terms of assembly, interacts with ECF RNA polymerase sigma factor SigD; this should inhibit the interaction of SigD with the RNA polymerase catalytic core. In terms of processing, the cytosolic fragment is degraded by a ClpP1-ClpP2-ClpX complex, as would be expected after S1P and S2P intramembrane proteolysis. This releases SigD so that it may bind to the RNA polymerase catalytic core.

It localises to the cell membrane. Functionally, an anti-sigma factor for extracytoplasmic function (ECF) sigma factor SigD. ECF sigma factors are held in an inactive form by an anti-sigma factor until released by regulated intramembrane proteolysis (RIP). RIP occurs when an extracytoplasmic signal triggers a concerted proteolytic cascade to transmit information and elicit cellular responses. The membrane-spanning regulatory substrate protein is first cut extracytoplasmically (site-1 protease, S1P), then within the membrane itself (site-2 protease, S2P), while cytoplasmic proteases finish degrading the regulatory protein, liberating the sigma factor. Neither S1P nor S2P proteases have been so far identified for this anti-sigma factor. The polypeptide is Anti-sigma-D factor RsdA (rsda) (Mycobacterium bovis (strain ATCC BAA-935 / AF2122/97)).